The sequence spans 55 residues: ATP synthase F(0) complex subunit 8 (55 aa).

The chain crosses the membrane as a helical span at residues 8–24 (PWFSIMVMTWLTLALLI). The tract at residues 35-55 (NPPSKKPSLITKPTPWAWPWT) is disordered.

It belongs to the ATPase protein 8 family. As to quaternary structure, component of the ATP synthase complex composed at least of ATP5F1A/subunit alpha, ATP5F1B/subunit beta, ATP5MC1/subunit c (homooctomer), MT-ATP6/subunit a, MT-ATP8/subunit 8, ATP5ME/subunit e, ATP5MF/subunit f, ATP5MG/subunit g, ATP5MK/subunit k, ATP5MJ/subunit j, ATP5F1C/subunit gamma, ATP5F1D/subunit delta, ATP5F1E/subunit epsilon, ATP5PF/subunit F6, ATP5PB/subunit b, ATP5PD/subunit d, ATP5PO/subunit OSCP. ATP synthase complex consists of a soluble F(1) head domain (subunits alpha(3) and beta(3)) - the catalytic core - and a membrane F(0) domain - the membrane proton channel (subunits c, a, 8, e, f, g, k and j). These two domains are linked by a central stalk (subunits gamma, delta, and epsilon) rotating inside the F1 region and a stationary peripheral stalk (subunits F6, b, d, and OSCP).

The protein localises to the mitochondrion membrane. In terms of biological role, subunit 8, of the mitochondrial membrane ATP synthase complex (F(1)F(0) ATP synthase or Complex V) that produces ATP from ADP in the presence of a proton gradient across the membrane which is generated by electron transport complexes of the respiratory chain. ATP synthase complex consist of a soluble F(1) head domain - the catalytic core - and a membrane F(1) domain - the membrane proton channel. These two domains are linked by a central stalk rotating inside the F(1) region and a stationary peripheral stalk. During catalysis, ATP synthesis in the catalytic domain of F(1) is coupled via a rotary mechanism of the central stalk subunits to proton translocation. In vivo, can only synthesize ATP although its ATP hydrolase activity can be activated artificially in vitro. Part of the complex F(0) domain. The polypeptide is ATP synthase F(0) complex subunit 8 (Anas platyrhynchos (Mallard)).